Here is an 89-residue protein sequence, read N- to C-terminus: Translation initiation factor IF-1, chloroplastic (89 aa).

The region spanning 1 to 73 is the S1-like domain; it reads MKEKEAKWVV…TKGRIIYRLP (73 aa).

The protein belongs to the IF-1 family. Component of the 30S ribosomal translation pre-initiation complex which assembles on the 30S ribosome in the order IF-2 and IF-3, IF-1 and N-formylmethionyl-tRNA(fMet); mRNA recruitment can occur at any time during PIC assembly.

The protein localises to the plastid. The protein resides in the chloroplast. In terms of biological role, one of the essential components for the initiation of protein synthesis. Stabilizes the binding of IF-2 and IF-3 on the 30S subunit to which N-formylmethionyl-tRNA(fMet) subsequently binds. Helps modulate mRNA selection, yielding the 30S pre-initiation complex (PIC). Upon addition of the 50S ribosomal subunit IF-1, IF-2 and IF-3 are released leaving the mature 70S translation initiation complex. The sequence is that of Translation initiation factor IF-1, chloroplastic from Jasminum nudiflorum (Winter jasmine).